The primary structure comprises 427 residues: 3-phosphoshikimate 1-carboxyvinyltransferase (427 aa).

Positions 23, 24, and 28 each coordinate 3-phosphoshikimate. Lys-23 contacts phosphoenolpyruvate. Phosphoenolpyruvate-binding residues include Gly-97 and Arg-125. Positions 169, 170, 171, 197, 313, 336, and 340 each coordinate 3-phosphoshikimate. Residue Gln-171 coordinates phosphoenolpyruvate. The Proton acceptor role is filled by Asp-313. Phosphoenolpyruvate contacts are provided by Arg-344, Arg-386, and Lys-411.

It belongs to the EPSP synthase family. In terms of assembly, monomer.

It localises to the cytoplasm. The catalysed reaction is 3-phosphoshikimate + phosphoenolpyruvate = 5-O-(1-carboxyvinyl)-3-phosphoshikimate + phosphate. The protein operates within metabolic intermediate biosynthesis; chorismate biosynthesis; chorismate from D-erythrose 4-phosphate and phosphoenolpyruvate: step 6/7. Functionally, catalyzes the transfer of the enolpyruvyl moiety of phosphoenolpyruvate (PEP) to the 5-hydroxyl of shikimate-3-phosphate (S3P) to produce enolpyruvyl shikimate-3-phosphate and inorganic phosphate. In Yersinia ruckeri, this protein is 3-phosphoshikimate 1-carboxyvinyltransferase.